Consider the following 632-residue polypeptide: Phosphoglucomutase, chloroplastic (632 aa).

Residues 1-72 (MAMESALTST…PSSPSTSVAQ (72 aa)) constitute a chloroplast transit peptide. Alpha-D-glucose 1,6-bisphosphate-binding residues include arginine 97 and serine 190. The Phosphoserine intermediate role is filled by serine 190. The Mg(2+) site is built by serine 190, aspartate 355, aspartate 357, and aspartate 359. Serine 190 bears the Phosphoserine mark. 6 residues coordinate alpha-D-glucose 1,6-bisphosphate: aspartate 359, arginine 360, threonine 423, glutamate 442, serine 444, and lysine 455.

It belongs to the phosphohexose mutase family. In terms of assembly, monomer. Mg(2+) serves as cofactor.

It is found in the plastid. The protein resides in the chloroplast. The enzyme catalyses alpha-D-glucose 1-phosphate = alpha-D-glucose 6-phosphate. The catalysed reaction is O-phospho-L-seryl-[protein] + alpha-D-glucose 1-phosphate = alpha-D-glucose 1,6-bisphosphate + L-seryl-[protein]. It carries out the reaction alpha-D-glucose 1,6-bisphosphate + L-seryl-[protein] = O-phospho-L-seryl-[protein] + alpha-D-glucose 6-phosphate. Inhibited by the Calvin cycle intermediates fructose-1,6-bisphosphate and ribulose-1,5-bisphosphate. Functionally, catalyzes the reversible isomerization of alpha-D-glucose 1-phosphate to alpha-D-glucose 6-phosphate. The mechanism proceeds via the intermediate compound alpha-D-glucose 1,6-bisphosphate. This enzyme participates in both the breakdown and synthesis of glucose. Promotes gravitropic responses, negative in shoots but positive in roots, by facilitating starch granules (statoliths) formation. In Solanum tuberosum (Potato), this protein is Phosphoglucomutase, chloroplastic (PGMP).